The following is a 470-amino-acid chain: Auxin transporter-like protein 3 (470 aa).

At 1–57 (MAAEKIETVVAGNYLEMEREEENISGNKKSSTKTKLSNFFWHGGSVYDAWFSCASNQ) the chain is on the cytoplasmic side. The chain crosses the membrane as a helical span at residues 58-75 (VAQVLLTLPYSFSQLGMM). Topologically, residues 76–77 (SG) are extracellular. Residues 78–98 (ILFQLFYGLMGSWTAYLISVL) form a helical membrane-spanning segment. Topologically, residues 99–134 (YVEYRTRKEREKFDFRNHVIQWFEVLDGLLGKHWRN) are cytoplasmic. Residues 135–155 (LGLIFNCTFLLFGSVIQLIAC) form a helical membrane-spanning segment. The Extracellular portion of the chain corresponds to 156-170 (ASNIYYINDKLDKRT). A helical transmembrane segment spans residues 171–191 (WTYIFGACCATTVFIPSFHNY). A topological domain (cytoplasmic) is located at residue arginine 192. The helical transmembrane segment at 193–213 (IWSFLGLAMTTYTSWYLTIAS) threads the bilayer. Topologically, residues 214–230 (LLHGQAEDVKHSGPTTM) are extracellular. A helical transmembrane segment spans residues 231 to 251 (VLYFTGATNILYTFGGHAVTV). The Cytoplasmic portion of the chain corresponds to 252–264 (EIMHAMWKPQKFK). The chain crosses the membrane as a helical span at residues 265–285 (AIYLLATIYVLTLTLPSASAV). The Extracellular portion of the chain corresponds to 286-312 (YWAFGDKLLTHSNALSLLPKTGFRDTA). Residues 313-333 (VILMLIHQFITFGFASTPLYF) traverse the membrane as a helical segment. Residues 334 to 354 (VWEKLIGVHETKSMFKRAMAR) lie on the Cytoplasmic side of the membrane. Residues 355–375 (LPVVVPIWFLAIIFPFFGPIN) form a helical membrane-spanning segment. Position 376 (serine 376) is a topological domain, extracellular. A helical membrane pass occupies residues 377 to 397 (AVGSLLVSFTVYIIPALAHML). Over 398 to 426 (TFAPAPSRENAVERPPRVVGGWMGTYCIN) the chain is Cytoplasmic. The helical transmembrane segment at 427-447 (IFVVVWVFVVGFGFGGWASMV) threads the bilayer. The Extracellular portion of the chain corresponds to 448-470 (NFVRQIDTFGLFTKCYQCPPHKP).

It belongs to the amino acid/polyamine transporter 2 family. Amino acid/auxin permease (AAAP) (TC 2.A.18.1) subfamily.

The protein localises to the cell membrane. Functionally, carrier protein involved in proton-driven auxin influx. Mediates the formation of auxin gradient from developing leaves (site of auxin biosynthesis) to tips by contributing to the loading of auxin in vascular tissues and facilitating acropetal (base to tip) auxin transport within inner tissues of the root apex, and basipetal (tip to base) auxin transport within outer tissues of the root apex. The chain is Auxin transporter-like protein 3 (LAX3) from Arabidopsis thaliana (Mouse-ear cress).